Consider the following 204-residue polypeptide: Serotonin N-acetyltransferase (204 aa).

Thr28 is subject to Phosphothreonine; by PKA. The region spanning 32-193 (SEFRCLTPED…SFTELHCSLQ (162 aa)) is the N-acetyltransferase domain. Leu121 contributes to the substrate binding site. Acetyl-CoA is bound by residues 121–123 (LAV) and 129–134 (QQGRGP). Met156 contacts substrate. 165–167 (YER) lines the acetyl-CoA pocket. Ser202 carries the phosphoserine modification.

The protein belongs to the acetyltransferase family. AANAT subfamily. As to quaternary structure, monomer. Interacts with several 14-3-3 proteins, including YWHAB, YWHAE, YWHAG and YWHAZ, preferentially when phosphorylated at Thr-28. Phosphorylation on Ser-202 also allows binding to YWHAZ, but with lower affinity. The interaction with YWHAZ considerably increases affinity for arylalkylamines and acetyl-CoA and protects the enzyme from dephosphorylation and proteasomal degradation. It may also prevent thiol-dependent inactivation. Post-translationally, cAMP-dependent phosphorylation regulates AANAT activity by promoting interaction with 14-3-3 proteins. Phosphorylation levels exhibit night/day variations, with an increase during nighttime. As to expression, highly expressed in pineal gland and in the photoreceptor outer segments in the retina. Expressed at about 100-fold lower levels in the pituitary gland and testis. Not detected in other tissues.

The protein resides in the cytoplasm. The enzyme catalyses a 2-arylethylamine + acetyl-CoA = an N-acetyl-2-arylethylamine + CoA + H(+). It functions in the pathway aromatic compound metabolism; melatonin biosynthesis; melatonin from serotonin: step 1/2. In terms of biological role, controls the night/day rhythm of melatonin production in the pineal gland. Catalyzes the N-acetylation of serotonin into N-acetylserotonin, the penultimate step in the synthesis of melatonin. This Macaca mulatta (Rhesus macaque) protein is Serotonin N-acetyltransferase (AANAT).